The following is a 114-amino-acid chain: Small nuclear ribonucleoprotein SmD1a (114 aa).

Positions 2–74 (KLVRFLMKLN…IRYYILPDSL (73 aa)) constitute a Sm domain. The tract at residues 87 to 114 (VKPKKPVAGKAVGRGRGRGRGRGRGRGR) is disordered. 8 tandem repeats follow at residues 99-100 (GR), 101-102 (GR), 103-104 (GR), 105-106 (GR), 107-108 (GR), 109-110 (GR), 111-112 (GR), and 113-114 (GR). Residues 99-114 (GRGRGRGRGRGRGRGR) are 8 X 2 AA tandem repeats of G-R.

It belongs to the snRNP core protein family.

Its subcellular location is the nucleus. The protein resides in the nucleus speckle. The protein localises to the nucleolus. Involved in splicing regulation. Facilitates post-transcriptional gene silencing (PTGS) by limiting the degradation of transgene aberrant RNAs by the RNA quality control (RQC) machinery, thus favoring their entry into cytoplasmic siRNA bodies where they can trigger PTGS. Does not participate in the production of small RNAs. The sequence is that of Small nuclear ribonucleoprotein SmD1a from Arabidopsis thaliana (Mouse-ear cress).